The sequence spans 359 residues: Molybdenum import ATP-binding protein ModC (359 aa).

One can recognise an ABC transporter domain in the interval 1–233 (MSGLTVSIRG…IDAESEGGGV (233 aa)). 32–39 (GHSGAGKT) is an ATP binding site. One can recognise a Mop domain in the interval 289-355 (AISIRNLLPV…VKAVSVDRAA (67 aa)).

It belongs to the ABC transporter superfamily. Molybdate importer (TC 3.A.1.8) family. As to quaternary structure, the complex is composed of two ATP-binding proteins (ModC), two transmembrane proteins (ModB) and a solute-binding protein (ModA).

Its subcellular location is the cell inner membrane. The catalysed reaction is molybdate(out) + ATP + H2O = molybdate(in) + ADP + phosphate + H(+). In terms of biological role, part of the ABC transporter complex ModABC involved in molybdenum import. Responsible for energy coupling to the transport system. In Brucella suis biovar 1 (strain 1330), this protein is Molybdenum import ATP-binding protein ModC.